Reading from the N-terminus, the 2812-residue chain is Polyunsaturated fatty acid synthase subunit A (2812 aa).

Residues 12-472 (DTRIAVIGMS…GANYHAVLEE (461 aa)) enclose the Ketosynthase family 3 (KS3) domain. Residues Cys-213, His-348, and His-390 each act as for beta-ketoacyl synthase activity in the active site. A Malonyl-CoA:ACP transacylase (MAT) domain is found at 602–913 (LFSGQGAQYT…TVSVNPASGK (312 aa)). Positions 1000–1048 (DEEAKREAARLQKQLEDAQRQLDEAKRAADEANQKLAAAKEEAKSAAAS) form a coiled coil. 3 Carrier domains span residues 1114–1193 (ALLA…KAEI), 1232–1308 (ERAE…KAEI), and 1342–1418 (AKAE…KAEI). Ser-1152, Ser-1267, and Ser-1377 each carry O-(pantetheine 4'-phosphoryl)serine. The disordered stretch occupies residues 1422–1442 (SAPAPAAAAPAPAAPAPAAAA). Residues 1423–1442 (APAPAAAAPAPAAPAPAAAA) show a composition bias toward low complexity. The Carrier 4 domain maps to 1455–1531 (AKAETVVMEV…EVVDAMKAEI (77 aa)). Position 1490 is an O-(pantetheine 4'-phosphoryl)serine (Ser-1490). The interval 1535–1555 (SAPAPAAAAPAPAAPAPAAAA) is disordered. Low complexity predominate over residues 1536–1555 (APAPAAAAPAPAAPAPAAAA). 4 consecutive Carrier domains span residues 1568 to 1644 (AKAE…KAEI), 1681 to 1757 (AKAE…KAEI), 1792 to 1868 (AKAE…KAEI), and 1903 to 1979 (AKAE…KAEI). 4 positions are modified to O-(pantetheine 4'-phosphoryl)serine: Ser-1603, Ser-1716, Ser-1827, and Ser-1938. The Ketoreductase (KR) domain occupies 2257-2484 (VVSGGARGIT…VKSICFGPWD (228 aa)). An N-terminal hotdog fold region spans residues 2524 to 2651 (EILVGNWRTP…RAVVVLSSQG (128 aa)). One can recognise a PKS/mFAS DH domain in the interval 2524–2812 (EILVGNWRTP…SVIATDSLAF (289 aa)). Residues 2540–2800 (ETITLHRKIS…NEQGDLFIDV (261 aa)) form a dehydratase (DH) domain region. The active-site Proton acceptor; for dehydratase activity is His-2559. The tract at residues 2666 to 2812 (ADPAAQSAVY…SVIATDSLAF (147 aa)) is C-terminal hotdog fold. Asp-2730 serves as the catalytic Proton donor; for dehydratase activity.

In terms of assembly, component of the polyunsaturated fatty acid synthase complex composed of at least ORF-A, ORF-B and ORF-C. The cofactor is pantetheine 4'-phosphate.

It participates in lipid metabolism; fatty acid biosynthesis. Poliketide synthase-like protein; part of the polyunsaturated fatty acid synthase composed of the 3 PKS-like subunits A, B and C. While the saturated fatty acids (SFAs) in Thraustochytrium are produced by the conventional fatty acid synthase (FAS) pathway, polyunsaturated fatty acids (PUFAs) including docosahexeanoic acid (DHA) and docosapentaenoic acid (DPA) are synthesized via an anaerobical PKS pathway. PUFA synthase assimilates fatty acyl-CoA, the product of FAS, as the starter unit to synthesize DPA, and this starter unit may be butyryl-CoA, hexanoyl-CoA, or octanoyl-CoA. DPA and DHA biosynthesis seem to differ by the reduction at the N-3 position by PUFA synthase, not the extension of carbon chain. In DHA biosynthesis, PUFA synthase extends the fatty acyl chain from the methyl toward the carboxyl end, and the double bond is formed when the carbon chain is growing, instead of afterward. Therefore, PUFA synthase is unable to transform DPA to DHA, suggesting that DPA is not the precursor of DHA. Moreover, DPA molecule is partly extended by FAS KS domain, so DPA biosynthesis is less dependent on PUFA synthase KS domain than DHA. This is Polyunsaturated fatty acid synthase subunit A from Thraustochytrium sp. (strain ATCC 26185 / S-3).